The following is an 822-amino-acid chain: Microcephalin (822 aa).

Positions 10–99 constitute a BRCT 1 domain; sequence AFLKDVVAYV…ALVDESLFPA (90 aa). Disordered stretches follow at residues 182-203, 219-243, and 266-295; these read MKEK…SQQN, PLSS…DQER, and SSFY…ESIN. Polar residues-rich tracts occupy residues 189–203 and 219–235; these read LSPT…SQQN and PLSS…SSFG. Phosphoserine occurs at positions 273, 290, and 327. At threonine 329 the chain carries Phosphothreonine. 3 disordered regions span residues 335 to 366, 498 to 567, and 594 to 636; these read EHQV…LKKR, NDSP…SPED, and TGYS…PTRT. Over residues 522 to 541 the composition is skewed to polar residues; it reads HPDTLSSSAHHITPLKGNST. Composition is skewed to basic and acidic residues over residues 542–553 and 625–634; these read ETRDPGDGKGSP and KKSEKEEKPT. 2 BRCT domains span residues 627–717 and 738–820; these read SEKE…PFEL and YQGT…NYQL.

As to quaternary structure, interacts with CDC27 and maybe other components of the APC/C complex. Interacts with histone variant H2AX under DNA damage conditions. As to expression, high levels of expression are found in the developing forebrain and, in particular, in the walls of the lateral ventricles.

The protein localises to the cytoplasm. The protein resides in the cytoskeleton. It localises to the microtubule organizing center. It is found in the centrosome. Implicated in chromosome condensation and DNA damage induced cellular responses. May play a role in neurogenesis and regulation of the size of the cerebral cortex. This is Microcephalin from Mus musculus (Mouse).